The primary structure comprises 1534 residues: DNA-directed RNA polymerase subunit beta'' (1534 aa).

Positions 220, 296, 303, and 306 each coordinate Zn(2+). Composition is skewed to basic and acidic residues over residues 644–668 (RTQEEEYRTREEEYRTREEEYRTRE) and 678–688 (PENKYRTREGE). Disordered stretches follow at residues 644–698 (RTQE…EDEY) and 719–800 (YRTL…KKEG). Acidic residues-rich tracts occupy residues 744–762 (GEYEILEEDSEEEYGSSED) and 770–789 (TLEEDSEEDSEEDSEDEYGS).

It belongs to the RNA polymerase beta' chain family. RpoC2 subfamily. In terms of assembly, in plastids the minimal PEP RNA polymerase catalytic core is composed of four subunits: alpha, beta, beta', and beta''. When a (nuclear-encoded) sigma factor is associated with the core the holoenzyme is formed, which can initiate transcription. Requires Zn(2+) as cofactor.

Its subcellular location is the plastid. It localises to the chloroplast. The catalysed reaction is RNA(n) + a ribonucleoside 5'-triphosphate = RNA(n+1) + diphosphate. Its function is as follows. DNA-dependent RNA polymerase catalyzes the transcription of DNA into RNA using the four ribonucleoside triphosphates as substrates. The chain is DNA-directed RNA polymerase subunit beta'' from Saccharum officinarum (Sugarcane).